A 162-amino-acid chain; its full sequence is MAKQKKFSGKGSARSKRKQNRKQVGPRRRVEFKYKGFTLGELQEMPIKKFMEIVPARQRRSMKKGITPKQRKLVMKIKKARRLANRGKDPRTIRTHCRDFVITPEMIGLPFGIYNGKEFIEVKLVEEAIGRFLGEFAPSRKVVQHGSPGMGATRGSMFVPIK.

A compositionally biased stretch (basic residues) spans 1-27 (MAKQKKFSGKGSARSKRKQNRKQVGPR). A disordered region spans residues 1-29 (MAKQKKFSGKGSARSKRKQNRKQVGPRRR).

Belongs to the universal ribosomal protein uS19 family.

Protein S19 forms a complex with S13 that binds strongly to the 16S ribosomal RNA. The sequence is that of Small ribosomal subunit protein uS19 from Methanococcus aeolicus (strain ATCC BAA-1280 / DSM 17508 / OCM 812 / Nankai-3).